Reading from the N-terminus, the 284-residue chain is Nucleotide-binding protein Shewmr7_3352 (284 aa).

8–15 (GRSGSGKS) lines the ATP pocket. GTP is bound at residue 56–59 (DVRN).

This sequence belongs to the RapZ-like family.

Displays ATPase and GTPase activities. The polypeptide is Nucleotide-binding protein Shewmr7_3352 (Shewanella sp. (strain MR-7)).